The sequence spans 232 residues: MSVVTMKQLLEAGVHFGHQTRRWNPKMATYIYMERNGIYIIDLQQTVKKFDAAYEFVKSVAAAGKGVLFVGTKKQAQETIREEASRCGMYFVNQRWLGGMLTNYKTIKRRVLRLKELEKQEAEGAFEVLSKKEVARLLNERERLERFLGGIKEMDKLPGAVFVVDPRKERIAVAEARKLNIPVVAIVDTNCDPDEIDYVIPGNDDAIRAVKLISSRIADAVLEGKQGEQITT.

This sequence belongs to the universal ribosomal protein uS2 family.

In Syntrophomonas wolfei subsp. wolfei (strain DSM 2245B / Goettingen), this protein is Small ribosomal subunit protein uS2.